Reading from the N-terminus, the 151-residue chain is MSTAARRRLMRDFKRMQTDPPAGVSASPVPDNVMTWNAVIIGPADTPFEDGTFRLVMHFEEQYPNKPPSVKFISEMFHPNVYATGELCLDILQNRWSPTYDVAAVLTSIQSLLNDPNTGSPANVEASNLYKDNRKEYHKRVRETVEKSWED.

A UBC core domain is found at 4–150 (AARRRLMRDF…VRETVEKSWE (147 aa)). Residue Cys88 is the Glycyl thioester intermediate of the active site.

Belongs to the ubiquitin-conjugating enzyme family.

The protein resides in the cytoplasm. It localises to the nucleus. The enzyme catalyses S-ubiquitinyl-[E1 ubiquitin-activating enzyme]-L-cysteine + [E2 ubiquitin-conjugating enzyme]-L-cysteine = [E1 ubiquitin-activating enzyme]-L-cysteine + S-ubiquitinyl-[E2 ubiquitin-conjugating enzyme]-L-cysteine.. It functions in the pathway protein modification; protein ubiquitination. Catalyzes the covalent attachment of ubiquitin to other proteins. Plays a role in transcription regulation by catalyzing the monoubiquitination of histone H2B to form H2BK123ub1. H2BK123ub1 gives a specific tag for epigenetic transcriptional activation and is also a prerequisite for H3K4me and H3K79me formation. Also involved in postreplication repair of UV-damaged DNA, in N-end rule-dependent protein degradation and in sporulation. This Neurospora crassa (strain ATCC 24698 / 74-OR23-1A / CBS 708.71 / DSM 1257 / FGSC 987) protein is Ubiquitin-conjugating enzyme E2 2 (mus-8).